Consider the following 767-residue polypeptide: DNA topoisomerase 1 (767 aa).

Residues M1–K23 are compositionally biased toward basic and acidic residues. Residues M1–E201 form a disordered region. S2 is subject to N-acetylserine. S2 and S10 each carry phosphoserine. Residues H24–K39 are compositionally biased toward basic residues. Positions K40–N110 are enriched in basic and acidic residues. Phosphoserine is present on S59. K103 participates in a covalent cross-link: Glycyl lysine isopeptide (Lys-Gly) (interchain with G-Cter in SUMO2). K105 participates in a covalent cross-link: Glycyl lysine isopeptide (Lys-Gly) (interchain with G-Cter in SUMO); alternate. A Glycyl lysine isopeptide (Lys-Gly) (interchain with G-Cter in SUMO2); alternate cross-link involves residue K105. S114 bears the Phosphoserine mark. K119 is covalently cross-linked (Glycyl lysine isopeptide (Lys-Gly) (interchain with G-Cter in SUMO); alternate). K119 participates in a covalent cross-link: Glycyl lysine isopeptide (Lys-Gly) (interchain with G-Cter in SUMO2); alternate. A Glycyl lysine isopeptide (Lys-Gly) (interchain with G-Cter in SUMO1); alternate cross-link involves residue K119. The segment covering P131 to E168 has biased composition (basic and acidic residues). Glycyl lysine isopeptide (Lys-Gly) (interchain with G-Cter in SUMO2) cross-links involve residues K136 and K150. K155 participates in a covalent cross-link: Glycyl lysine isopeptide (Lys-Gly) (interchain with G-Cter in SUMO); alternate. Residue K155 forms a Glycyl lysine isopeptide (Lys-Gly) (interchain with G-Cter in SUMO2); alternate linkage. Residues K160 and K166 each participate in a glycyl lysine isopeptide (Lys-Gly) (interchain with G-Cter in SUMO2) cross-link. A Glycyl lysine isopeptide (Lys-Gly) (interchain with G-Cter in SUMO2); alternate cross-link involves residue K174. Residue K174 is modified to N6-acetyllysine; alternate. The segment covering K181 to E201 has biased composition (basic and acidic residues). K206 participates in a covalent cross-link: Glycyl lysine isopeptide (Lys-Gly) (interchain with G-Cter in SUMO2). K282 bears the N6-acetyllysine mark. Residue K338 forms a Glycyl lysine isopeptide (Lys-Gly) (interchain with G-Cter in SUMO2) linkage. 2 interaction with DNA regions span residues K427–Y428 and R490–K495. A Topo IB-type catalytic domain is found at S434–F767. S508 carries the post-translational modification Phosphoserine; by CK2. Residue K551 forms a Glycyl lysine isopeptide (Lys-Gly) (interchain with G-Cter in SUMO2) linkage. Residues T587–K589 form an interaction with DNA region. Glycyl lysine isopeptide (Lys-Gly) (interchain with G-Cter in SUMO2) cross-links involve residues K644, K702, and K714. Y725 acts as the O-(3'-phospho-DNA)-tyrosine intermediate in catalysis.

Belongs to the type IB topoisomerase family. Monomer. Interacts with ERCC6. Interacts with TPRN; TPRN interacts with a number of DNA damage response proteins, is recruited to sites of DNA damage and may play a role in DNA damage repair. Post-translationally, sumoylated. Lys-119 is the main site of sumoylation. Sumoylation plays a role in partitioning TOP1 between nucleoli and nucleoplasm. Levels are dramatically increased on camptothecin (CPT) treatment. In terms of processing, phosphorylation at Ser-508 by CK2 increases binding to supercoiled DNA and sensitivity to camptothecin.

It is found in the nucleus. It localises to the nucleolus. The protein localises to the nucleoplasm. The enzyme catalyses ATP-independent breakage of single-stranded DNA, followed by passage and rejoining.. In terms of biological role, releases the supercoiling and torsional tension of DNA introduced during the DNA replication and transcription by transiently cleaving and rejoining one strand of the DNA duplex. Introduces a single-strand break via transesterification at a target site in duplex DNA. The scissile phosphodiester is attacked by the catalytic tyrosine of the enzyme, resulting in the formation of a DNA-(3'-phosphotyrosyl)-enzyme intermediate and the expulsion of a 5'-OH DNA strand. The free DNA strand then rotates around the intact phosphodiester bond on the opposing strand, thus removing DNA supercoils. Finally, in the religation step, the DNA 5'-OH attacks the covalent intermediate to expel the active-site tyrosine and restore the DNA phosphodiester backbone. Regulates the alternative splicing of tissue factor (F3) pre-mRNA in endothelial cells. Involved in the circadian transcription of the core circadian clock component BMAL1 by altering the chromatin structure around the ROR response elements (ROREs) on the BMAL1 promoter. The sequence is that of DNA topoisomerase 1 (Top1) from Mus musculus (Mouse).